The chain runs to 217 residues: Adenylate kinase (217 aa).

Glycine 10 to threonine 15 provides a ligand contact to ATP. Residues serine 30–valine 59 form an NMP region. Residues threonine 31, arginine 36, glutamate 57–valine 59, glycine 85–arginine 88, and glutamine 92 contribute to the AMP site. The interval glycine 126–aspartate 164 is LID. Arginine 127 contributes to the ATP binding site. Zn(2+) contacts are provided by cysteine 130 and cysteine 133. ATP is bound at residue isoleucine 136 to tyrosine 137. Residues cysteine 150 and cysteine 153 each contribute to the Zn(2+) site. 2 residues coordinate AMP: arginine 161 and arginine 172. ATP is bound at residue aspartate 200.

It belongs to the adenylate kinase family. As to quaternary structure, monomer.

The protein resides in the cytoplasm. It catalyses the reaction AMP + ATP = 2 ADP. Its pathway is purine metabolism; AMP biosynthesis via salvage pathway; AMP from ADP: step 1/1. In terms of biological role, catalyzes the reversible transfer of the terminal phosphate group between ATP and AMP. Plays an important role in cellular energy homeostasis and in adenine nucleotide metabolism. The sequence is that of Adenylate kinase from Nitrosococcus oceani (strain ATCC 19707 / BCRC 17464 / JCM 30415 / NCIMB 11848 / C-107).